We begin with the raw amino-acid sequence, 421 residues long: UDP-N-acetylglucosamine 1-carboxyvinyltransferase 1 (421 aa).

22–23 is a binding site for phosphoenolpyruvate; it reads KN. R95 is a UDP-N-acetyl-alpha-D-glucosamine binding site. The active-site Proton donor is the C119. C119 is subject to 2-(S-cysteinyl)pyruvic acid O-phosphothioketal. UDP-N-acetyl-alpha-D-glucosamine-binding positions include 124–128, D308, and V330; that span reads RPIEQ.

Belongs to the EPSP synthase family. MurA subfamily.

It is found in the cytoplasm. It carries out the reaction phosphoenolpyruvate + UDP-N-acetyl-alpha-D-glucosamine = UDP-N-acetyl-3-O-(1-carboxyvinyl)-alpha-D-glucosamine + phosphate. It participates in cell wall biogenesis; peptidoglycan biosynthesis. Its function is as follows. Cell wall formation. Adds enolpyruvyl to UDP-N-acetylglucosamine. This is UDP-N-acetylglucosamine 1-carboxyvinyltransferase 1 from Staphylococcus epidermidis (strain ATCC 35984 / DSM 28319 / BCRC 17069 / CCUG 31568 / BM 3577 / RP62A).